A 218-amino-acid polypeptide reads, in one-letter code: Probable transaldolase (218 aa).

The active-site Schiff-base intermediate with substrate is lysine 83.

The protein belongs to the transaldolase family. Type 3B subfamily.

Its subcellular location is the cytoplasm. The catalysed reaction is D-sedoheptulose 7-phosphate + D-glyceraldehyde 3-phosphate = D-erythrose 4-phosphate + beta-D-fructose 6-phosphate. The protein operates within carbohydrate degradation; pentose phosphate pathway; D-glyceraldehyde 3-phosphate and beta-D-fructose 6-phosphate from D-ribose 5-phosphate and D-xylulose 5-phosphate (non-oxidative stage): step 2/3. Functionally, transaldolase is important for the balance of metabolites in the pentose-phosphate pathway. This Parvibaculum lavamentivorans (strain DS-1 / DSM 13023 / NCIMB 13966) protein is Probable transaldolase.